A 105-amino-acid polypeptide reads, in one-letter code: ATPase inhibitor A, mitochondrial (105 aa).

The disordered stretch occupies residues 17-52; the sequence is MSSDQLGELGTGAGKGGGGGGSVRAAGGSFGRREAA. The segment at 22-51 is N-terminal inhibitory region; sequence LGELGTGAGKGGGGGGSVRAAGGSFGRREA. Residues 25–38 are compositionally biased toward gly residues; sequence LGTGAGKGGGGGGS. Positions 58–105 form a coiled coil; that stretch reads FRQKEREQLAALKNHHEEEIDHHKKEIERLQREIDRHKGKIRKLKHDD. Residues 73 to 105 are antiparallel alpha-helical coiled coil region; sequence HEEEIDHHKKEIERLQREIDRHKGKIRKLKHDD.

The protein belongs to the ATPase inhibitor family. In terms of assembly, homodimer; represents the active form and is present at a pH value below 6.5. Homotetramer; represents the inactive form and is present at a pH value above 7.0.

It is found in the mitochondrion. Endogenous F(1)F(o)-ATPase inhibitor limiting ATP depletion when the mitochondrial membrane potential falls below a threshold and the F(1)F(o)-ATP synthase starts hydrolyzing ATP to pump protons out of the mitochondrial matrix. Required to avoid the consumption of cellular ATP when the F(1)F(o)-ATP synthase enzyme acts as an ATP hydrolase. Indirectly acts as a regulator of heme synthesis in erythroid tissues: regulates heme synthesis by modulating the mitochondrial pH and redox potential, allowing fech to efficiently catalyze the incorporation of iron into protoporphyrin IX to produce heme. This chain is ATPase inhibitor A, mitochondrial, found in Danio rerio (Zebrafish).